The sequence spans 188 residues: uncharacterized protein (188 aa).

A run of 3 helical transmembrane segments spans residues Met-6–Leu-26, Phe-43–Ala-63, and Ala-110–Ala-130.

It is found in the membrane. This is an uncharacterized protein from Schizosaccharomyces pombe (strain 972 / ATCC 24843) (Fission yeast).